Reading from the N-terminus, the 433-residue chain is DNA polymerase processivity factor (433 aa).

The interval arginine 274 to glycine 433 is disordered. 3 stretches are compositionally biased toward gly residues: residues serine 289–serine 298, glycine 325–glycine 336, and glycine 344–glycine 359. A compositionally biased stretch (basic and acidic residues) spans glycine 360–lysine 376. A compositionally biased stretch (gly residues) spans glycine 385–leucine 398. A Glycyl lysine isopeptide (Lys-Gly) (interchain with G-Cter in host SUMO1) cross-link involves residue lysine 410. Phosphoserine occurs at positions 413, 415, and 418.

It belongs to the herpesviridae polymerase accessory protein family. In terms of assembly, forms homodimers. Interacts with host SMARCB1. Interacts with host NCL/nucleolin; this interaction is important for the organization of proteins within viral replication compartments. Interacts with UL112/UL113; this interaction is necessary for efficient viral DNA replication. Interacts with UL84. Interacts with the uracil DNA glycosylase UL114. Interacts with the DNA polymerase catalytic subunit UL54. Interacts with host IRF3. Interacts with host RELA. Phosphorylated by UL97 on serine residues, phosphorylation seems important for UL44 nuclear entry but does not directly affect its role in replication. In terms of processing, sumoylated. Sumoylation on Lys-410 increases viral DNA replication.

It localises to the virion. It is found in the host nucleus. Accessory subunit of the DNA polymerase that plays an essential role in viral DNA replication and acts by increasing the processivity of polymerization. Forms dimers that binds to double-stranded DNA and UL54 specifically to stimulates long chain DNA synthesis efficiently. Plays an important role in maintaining the structure of viral replication compartments by interacting with host nucleolin/NUC. In addition, suppresses innate immune responses through effects on host IRF3 and NF-kappa-B. Mechanistically, interfere with the binding of IRF3 and the p65 NF-kappa-B subunit to the promoters of antiviral genes, thereby inhibiting the expression of these genes. The sequence is that of DNA polymerase processivity factor (UL44) from Homo sapiens (Human).